The following is a 411-amino-acid chain: Branched-chain-amino-acid aminotransferase, cytosolic (411 aa).

Position 247 is an N6-(pyridoxal phosphate)lysine (Lys247).

Belongs to the class-IV pyridoxal-phosphate-dependent aminotransferase family. Homodimer. It depends on pyridoxal 5'-phosphate as a cofactor. The N-terminus is blocked. As to expression, brain, low expression in ovary and placenta, but not found in liver, kidney, and skeletal muscle.

Its subcellular location is the cytoplasm. It carries out the reaction L-leucine + 2-oxoglutarate = 4-methyl-2-oxopentanoate + L-glutamate. It catalyses the reaction L-isoleucine + 2-oxoglutarate = (S)-3-methyl-2-oxopentanoate + L-glutamate. The enzyme catalyses L-valine + 2-oxoglutarate = 3-methyl-2-oxobutanoate + L-glutamate. In terms of biological role, catalyzes the first reaction in the catabolism of the essential branched chain amino acids leucine, isoleucine, and valine. This Rattus norvegicus (Rat) protein is Branched-chain-amino-acid aminotransferase, cytosolic (Bcat1).